Reading from the N-terminus, the 39-residue chain is Cytochrome b6-f complex subunit 5 (39 aa).

Residues 5–25 traverse the membrane as a helical segment; sequence LLSGIVLGLVPVTILGLFVTA.

This sequence belongs to the PetG family. The 4 large subunits of the cytochrome b6-f complex are cytochrome b6, subunit IV (17 kDa polypeptide, PetD), cytochrome f and the Rieske protein, while the 4 small subunits are PetG, PetL, PetM and PetN. The complex functions as a dimer.

It is found in the plastid. The protein localises to the chloroplast thylakoid membrane. Functionally, component of the cytochrome b6-f complex, which mediates electron transfer between photosystem II (PSII) and photosystem I (PSI), cyclic electron flow around PSI, and state transitions. PetG is required for either the stability or assembly of the cytochrome b6-f complex. The protein is Cytochrome b6-f complex subunit 5 of Pleurastrum terricola (Filamentous green alga).